Here is a 156-residue protein sequence, read N- to C-terminus: 6,7-dimethyl-8-ribityllumazine synthase (156 aa).

Residues Phe22, 56-58, and 80-82 each bind 5-amino-6-(D-ribitylamino)uracil; these read AFE and AVI. 85–86 is a binding site for (2S)-2-hydroxy-3-oxobutyl phosphate; sequence ST. Residue His88 is the Proton donor of the active site. Phe113 contributes to the 5-amino-6-(D-ribitylamino)uracil binding site. Arg127 contributes to the (2S)-2-hydroxy-3-oxobutyl phosphate binding site.

It belongs to the DMRL synthase family.

The catalysed reaction is (2S)-2-hydroxy-3-oxobutyl phosphate + 5-amino-6-(D-ribitylamino)uracil = 6,7-dimethyl-8-(1-D-ribityl)lumazine + phosphate + 2 H2O + H(+). It functions in the pathway cofactor biosynthesis; riboflavin biosynthesis; riboflavin from 2-hydroxy-3-oxobutyl phosphate and 5-amino-6-(D-ribitylamino)uracil: step 1/2. Functionally, catalyzes the formation of 6,7-dimethyl-8-ribityllumazine by condensation of 5-amino-6-(D-ribitylamino)uracil with 3,4-dihydroxy-2-butanone 4-phosphate. This is the penultimate step in the biosynthesis of riboflavin. The protein is 6,7-dimethyl-8-ribityllumazine synthase of Caldicellulosiruptor saccharolyticus (strain ATCC 43494 / DSM 8903 / Tp8T 6331).